Here is a 308-residue protein sequence, read N- to C-terminus: Zinc finger CCCH domain-containing protein 15 (308 aa).

Positions M1–G21 are disordered. Over residues S9–G21 the composition is skewed to low complexity. Residues T56 to R91 are a coiled coil. The segment at L110–G190 is disordered. S111 is subject to Phosphoserine. The span at R148 to K164 shows a compositional bias: polar residues. 2 consecutive C3H1-type zinc fingers follow at residues M222–K250 and R260–S288.

Phosphorylated at Ser-111 by ASK7/BIN2 in the cytoplasm in the absence of brassinosteroids (BRs). Highly expressed in secondary cell wall-forming tissues and the xylem cells of roots. Expressed predominantly in inflorescence stems, flowers and siliques. Highly expressed in the basal portion of stems, where cells are undergoing secondary cell wall thickening. Highly expressed in meiocytes and tapetum from anthers.

It is found in the cytoplasm. The protein localises to the nucleus. Functions probably as a transcriptional factor that activates genes involved in secondary cell wall biosynthesis. Functions redudantly with C3H14 to regulate secondary cell wall formation. C3H14 and C3H15 have overlapping roles in the regulation of secondary cell wall formation and anther development. C3H14 may contribute more to secondary cell wall thickening while C3H15 could be more important in anther development. May regulate at both the transcriptional and post-transcriptional levels the expression of many genes involved in various biological processes, particularly those associated with cell wall metabolism and pollen development. Involved in the regulation of callose metabolism in male meiocytes, in integrity of newly formed microspores, and promotes male fertility. May be involved in the regulation of the callose synthesis genes CALS5 and CALS12, the potential degradation of callose walls-related genes A6 and MYB80, as well as other putative beta-1,3-glucanase genes. Negatively regulates cell elongation by inhibiting brassinosteroid (BR) signaling. Functions downstream of the BRI1 receptor as a negative regulator in the BR pathway. The protein is Zinc finger CCCH domain-containing protein 15 of Arabidopsis thaliana (Mouse-ear cress).